The sequence spans 135 residues: Large ribosomal subunit protein uL16c (135 aa).

Belongs to the universal ribosomal protein uL16 family. As to quaternary structure, part of the 50S ribosomal subunit.

It is found in the plastid. The protein localises to the chloroplast. This is Large ribosomal subunit protein uL16c from Oenothera argillicola (Appalachian evening primrose).